The primary structure comprises 2670 residues: Inositol 1,4,5-trisphosphate-gated calcium channel ITPR3 (2670 aa).

At 1–2201 (MNEMSSFLHI…LIYWFSRRMT (2201 aa)) the chain is on the cytoplasmic side. 5 MIR domains span residues 113-173 (GDVV…LRSN), 174-224 (GDNV…INLF), 232-288 (EEVL…VEVV), 295-372 (GGAG…LDPT), and 378-434 (DSFV…IVSV). The 1D-myo-inositol 1,4,5-trisphosphate site is built by Arg-266, Thr-268, Leu-269, and Arg-270. The interval 321–344 (PSYKGDVSDPKAAGPGAQSRTGRR) is disordered. Residues Arg-503, Lys-507, Arg-510, Tyr-567, Arg-568, and Lys-569 each contribute to the 1D-myo-inositol 1,4,5-trisphosphate site. Arg-743 contributes to the Ca(2+) binding site. Ser-916 and Ser-934 each carry phosphoserine. The Ca(2+) site is built by Glu-1122 and Glu-1125. The span at 1134–1153 (VKGEEGEAGASKDKKERPSD) shows a compositional bias: basic and acidic residues. Disordered regions lie at residues 1134-1164 (VKGE…HGEK) and 1807-1849 (NMSD…GLHR). Ser-1813, Ser-1832, and Ser-1834 each carry phosphoserine. Over residues 1831–1842 (SSFSMPSSSRYS) the composition is skewed to low complexity. Residues Glu-1881 and Glu-1945 each coordinate Ca(2+). Residues Ala-1995, Glu-2148, and Lys-2151 each coordinate ATP. Residues 2202–2222 (LWGSISFNLAVFINIIIAFFY) traverse the membrane as a helical segment. The Extracellular portion of the chain corresponds to 2223–2233 (PYVEGASTGVL). A helical membrane pass occupies residues 2234 to 2254 (GSPLISLLFWILICFSIAALF). Residues 2255 to 2263 (TKHYSVRPL) lie on the Cytoplasmic side of the membrane. A helical transmembrane segment spans residues 2264–2284 (IVALVLRSIYYLGIGPTLNIL). The Extracellular portion of the chain corresponds to 2285–2324 (GALNLTNKIVFVVSFVGNRGTFIRGYKAMVMDMEFLYHVG). The chain crosses the membrane as a helical span at residues 2325–2345 (YILTSVLGLFAHELFYSILLF). The Cytoplasmic portion of the chain corresponds to 2346-2367 (DLIYREETLFNVIKSVTRNGRS). The helical transmembrane segment at 2368–2388 (ILLTALLALILVYLFSIVGFL) threads the bilayer. At 2389-2495 (FLKDDFILEV…ESLFPARVVY (107 aa)) the chain is on the extracellular side. Cys-2454 and Cys-2460 are joined by a disulfide. The chain crosses the membrane as a helical span at residues 2496–2516 (DLLFFFIVIIIVLNLIFGVII). The Cytoplasmic portion of the chain corresponds to 2517–2670 (DTFADLRSEK…FVDVQNCMSR (154 aa)). ATP-binding residues include Cys-2537 and Phe-2538. Cys-2537 contacts Zn(2+). Residues Cys-2540 and His-2557 each coordinate Zn(2+). Residues Lys-2559, His-2562, Asn-2563, and Met-2564 each coordinate ATP. A Zn(2+)-binding site is contributed by His-2562. Ca(2+) is bound at residue Thr-2580. A phosphoserine mark is found at Ser-2608 and Ser-2669.

This sequence belongs to the InsP3 receptor family. Homotetramer. Homodimer. Interacts with TRPC1 and TRPC3. Interacts with TRPC4. Interacts with TRPV4. Interacts with SIGMAR1. Interacts with AKT1 and PML. Interacts with IRAG2 (via coiled-coil domain). Interacts with CABP1. Interacts with TMBIM4/LFG4. Interacts with CEMIP. Interacts with TESPA1. Interacts with TMEM203. Interacts with BOK; regulates ITPR3 expression. Interacts with BCL2L10. Interacts with CHGA and CHGB. In terms of processing, phosphorylated by AKT1 on serine and/or threonine residues.

Its subcellular location is the endoplasmic reticulum membrane. It is found in the cytoplasmic vesicle. The protein resides in the secretory vesicle membrane. It catalyses the reaction Ca(2+)(in) = Ca(2+)(out). With respect to regulation, inositol 1,4,5-trisphosphate-gated calcium channel is regulated by cytosolic calcium in a biphasic manner. At low concentrations, cytosolic calcium binds at a high-affinity juxtamembrane domain (JD) calcium binding site, allowing ITPR3 to activate by escaping a low-energy resting state through an ensemble of preactivated states. At high cytosolic calcium concentrations, ITPR3 preferentially enters an inhibited state stabilized by calcium binding at a second, low-affinity cytoplasmic domain (CD) calcium binding site. Inositol 1,4,5-trisphosphate-gated calcium channel that, upon 1D-myo-inositol 1,4,5-trisphosphate binding, transports calcium from the endoplasmic reticulum lumen to cytoplasm, thus releasing the intracellular calcium and therefore participates in cellular calcium ion homeostasis. 11D-myo-inositol 1,4,5-trisphosphate binds to the ligand-free channel without altering its global conformation, yielding the low-energy resting state, then progresses through resting-to preactivated transitions to the higher energy preactivated state, which increases affinity for calcium, promoting binding of the low basal cytosolic calcium at the juxtamembrane domain (JD) site, favoring the transition through the ensemble of high-energy intermediate states along the trajectory to the fully-open activated state. Upon opening, releases calcium in the cytosol where it can bind to the low-affinity cytoplasmic domain (CD) site and stabilizes the inhibited state to terminate calcium release. This is Inositol 1,4,5-trisphosphate-gated calcium channel ITPR3 from Rattus norvegicus (Rat).